Here is a 568-residue protein sequence, read N- to C-terminus: SLAIN motif-containing protein 1 (568 aa).

5 disordered regions span residues 1–22, 59–92, 139–162, 235–256, and 291–403; these read MMAEQVKCASAGVSSGAGSGPV, LLLLPPPPPAAPPPAGLQPLGPRSPPAATATAAA, GGGPEPGGAGTPPGAAAAPPSPPP, YTSRGSPLSPQSSIDSELSTSE, and STSA…LRRS. Residues 21–56 are a coiled coil; that stretch reads PVVNAELEVKKLQELVRKLEKQNEQLRSRAASAAAA. Residues 62-74 are compositionally biased toward pro residues; sequence LPPPPPAAPPPAG. The span at 75–92 shows a compositional bias: low complexity; that stretch reads LQPLGPRSPPAATATAAA. The segment covering 139-149 has biased composition (gly residues); it reads GGGPEPGGAGT. Residues 235 to 245 are compositionally biased toward polar residues; the sequence is YTSRGSPLSPQ. At Ser243 the chain carries Phosphoserine. Low complexity-rich tracts occupy residues 246–255 and 291–307; these read SSIDSELSTS and STSASVSRHSSSVSLSS. Positions 316–329 are enriched in acidic residues; sequence QEYDQYSLEDEEEF. Positions 366 to 384 are enriched in low complexity; that stretch reads SSQYFPSNNYQQQQYYSPQ. Polar residues predominate over residues 385-395; that stretch reads AQTPDQQPNRT. Asymmetric dimethylarginine occurs at positions 471 and 543.

It belongs to the SLAIN motif-containing family. Interacts with MAPRE1, MAPRE2, MAPRE3 and CKAP5. Interacts with ZDHHC17 (via ANK repeats). Expressed in embryonic stem cells. Expressed in brain.

It localises to the cytoplasm. The protein localises to the cytoskeleton. In terms of biological role, microtubule plus-end tracking protein that might be involved in the regulation of cytoplasmic microtubule dynamics, microtubule organization and microtubule elongation. This chain is SLAIN motif-containing protein 1 (SLAIN1), found in Homo sapiens (Human).